Consider the following 258-residue polypeptide: Small ribosomal subunit protein uS2 (258 aa).

This sequence belongs to the universal ribosomal protein uS2 family.

The protein is Small ribosomal subunit protein uS2 of Leuconostoc mesenteroides subsp. mesenteroides (strain ATCC 8293 / DSM 20343 / BCRC 11652 / CCM 1803 / JCM 6124 / NCDO 523 / NBRC 100496 / NCIMB 8023 / NCTC 12954 / NRRL B-1118 / 37Y).